Reading from the N-terminus, the 438-residue chain is MLDIQLLRKDIDAVAARLKDRGYVLDVAGFAALEAERKAIQTRTEELQARRNSLSKQIGVLKGKGEDASGVMAEVSGIGDELKASAAQLDVVQAKLQDLMLSIPNLPHESVPAGRDETQNVEVRREGTPRTFDFPVKDHVDLGAALGLDFDAGAKLSGARFTVLKGQVARLHRALAQFMLDTHTLEHGYTEAYVPYIVNAASMRGTGQLPKFEEDLFRVPRKMGHSAEEGDGERVENFYLIPTAEVPLTNLVRDEIVAADTLPMMFAAHSPCFRSEAGSYGKDTRGMIRQHQFDKVEMVQIVQPETSAAALEAMTNCAENILRKLELPFRTVVLCTGDMGFGSTKTYDIEVWIPAQNTYREISSCSNMGDFQARRMQARFRNAQGKPELVHTLNGSGLAVGRTLVALLENYQNADGSVTVPTALRPYLGGQEVLKPAV.

An L-serine-binding site is contributed by 243–245; sequence TAE. 274-276 serves as a coordination point for ATP; it reads RSE. An L-serine-binding site is contributed by E297. 361–364 is a binding site for ATP; it reads EISS. S396 is a binding site for L-serine.

Belongs to the class-II aminoacyl-tRNA synthetase family. Type-1 seryl-tRNA synthetase subfamily. In terms of assembly, homodimer. The tRNA molecule binds across the dimer.

The protein resides in the cytoplasm. The catalysed reaction is tRNA(Ser) + L-serine + ATP = L-seryl-tRNA(Ser) + AMP + diphosphate + H(+). It catalyses the reaction tRNA(Sec) + L-serine + ATP = L-seryl-tRNA(Sec) + AMP + diphosphate + H(+). Its pathway is aminoacyl-tRNA biosynthesis; selenocysteinyl-tRNA(Sec) biosynthesis; L-seryl-tRNA(Sec) from L-serine and tRNA(Sec): step 1/1. In terms of biological role, catalyzes the attachment of serine to tRNA(Ser). Is also able to aminoacylate tRNA(Sec) with serine, to form the misacylated tRNA L-seryl-tRNA(Sec), which will be further converted into selenocysteinyl-tRNA(Sec). The chain is Serine--tRNA ligase from Ralstonia pickettii (strain 12J).